The primary structure comprises 497 residues: Probable malate:quinone oxidoreductase (497 aa).

This sequence belongs to the MQO family. FAD serves as cofactor.

It carries out the reaction (S)-malate + a quinone = a quinol + oxaloacetate. It participates in carbohydrate metabolism; tricarboxylic acid cycle; oxaloacetate from (S)-malate (quinone route): step 1/1. This Hahella chejuensis (strain KCTC 2396) protein is Probable malate:quinone oxidoreductase.